A 369-amino-acid chain; its full sequence is Choline kinase B2 (369 aa).

The protein belongs to the choline/ethanolamine kinase family. Mg(2+) is required as a cofactor.

It catalyses the reaction choline + ATP = phosphocholine + ADP + H(+). Its pathway is phospholipid metabolism; phosphatidylcholine biosynthesis; phosphocholine from choline: step 1/1. Its function is as follows. Catalyzes the first step in phosphatidylcholine biosynthesis. Phosphorylates choline. The chain is Choline kinase B2 (ckb-2) from Caenorhabditis elegans.